The primary structure comprises 167 residues: Small ribosomal subunit protein uS5 (167 aa).

An S5 DRBM domain is found at 11–74 (LQEKLIAVNR…EKARRNMINV (64 aa)).

It belongs to the universal ribosomal protein uS5 family. Part of the 30S ribosomal subunit. Contacts proteins S4 and S8.

Its function is as follows. With S4 and S12 plays an important role in translational accuracy. Located at the back of the 30S subunit body where it stabilizes the conformation of the head with respect to the body. The polypeptide is Small ribosomal subunit protein uS5 (Shigella dysenteriae serotype 1 (strain Sd197)).